An 80-amino-acid polypeptide reads, in one-letter code: Exodeoxyribonuclease 7 small subunit (80 aa).

Belongs to the XseB family. In terms of assembly, heterooligomer composed of large and small subunits.

The protein localises to the cytoplasm. The enzyme catalyses Exonucleolytic cleavage in either 5'- to 3'- or 3'- to 5'-direction to yield nucleoside 5'-phosphates.. In terms of biological role, bidirectionally degrades single-stranded DNA into large acid-insoluble oligonucleotides, which are then degraded further into small acid-soluble oligonucleotides. The sequence is that of Exodeoxyribonuclease 7 small subunit from Halalkalibacterium halodurans (strain ATCC BAA-125 / DSM 18197 / FERM 7344 / JCM 9153 / C-125) (Bacillus halodurans).